The primary structure comprises 123 residues: Protein Wnt-7b (123 aa).

A lipid anchor (O-palmitoleoyl serine; by PORCN) is attached at Ser1. Positions Val33 to Thr61 are disordered linker. The cysteines at positions 89 and 104 are disulfide-linked. An N-linked (GlcNAc...) asparagine glycan is attached at Asn90.

It belongs to the Wnt family. Palmitoleoylation is required for efficient binding to frizzled receptors. Depalmitoleoylation leads to Wnt signaling pathway inhibition.

It is found in the secreted. The protein resides in the extracellular space. It localises to the extracellular matrix. Functionally, ligand for members of the frizzled family of seven transmembrane receptors that functions in the canonical Wnt/beta-catenin signaling pathway. Required for normal fusion of the chorion and the allantois during placenta development. Required for central nervous system (CNS) angiogenesis and blood-brain barrier regulation. The chain is Protein Wnt-7b (WNT-7B) from Alopias vulpinus (Common thresher shark).